Consider the following 43-residue polypeptide: Protein PsbN (43 aa).

A helical transmembrane segment spans residues 4–24 (ATIIVIFVSSLLVGITAYSVY).

The protein belongs to the PsbN family.

Its subcellular location is the plastid. The protein resides in the chloroplast thylakoid membrane. Functionally, may play a role in photosystem I and II biogenesis. The protein is Protein PsbN of Thalassiosira pseudonana (Marine diatom).